A 520-amino-acid polypeptide reads, in one-letter code: Calcium-dependent protein kinase 25 (520 aa).

Gly-2 is lipidated: N-myristoyl glycine. The disordered stretch occupies residues 31-87 (PLKPQLQDKPPQPMLMNKDDDKTKLNDTHGDPKLLEGKEKPAQKQTSQGQGGRKCSD). Residues 47-72 (NKDDDKTKLNDTHGDPKLLEGKEKPA) show a composition bias toward basic and acidic residues. Positions 132–390 (YNLGSKLGHG…AQQVLCHPWI (259 aa)) constitute a Protein kinase domain. ATP-binding positions include 138 to 146 (LGHGQFGTT) and Lys-161. Asp-256 serves as the catalytic Proton acceptor. Position 296 is a phosphoserine (Ser-296). An autoinhibitory domain region spans residues 396 to 426 (APDTPLDTTVLSRLKKFSATDKLKKMALRVI). In terms of domain architecture, EF-hand 1 spans 433–468 (EEIHELRETFKTIDSGKSGRVTYKELKNGLERFNTN). 8 residues coordinate Ca(2+): Asp-446, Ser-450, Arg-452, Glu-457, Asp-483, Glu-487, Thr-489, and Glu-494. The EF-hand 2; degenerate domain maps to 469–505 (LDNSDINSLMQIPTDVHLEDTVDYNEFIEAIVRLRQI).

Belongs to the protein kinase superfamily. Ser/Thr protein kinase family. CDPK subfamily.

Its subcellular location is the membrane. The catalysed reaction is L-seryl-[protein] + ATP = O-phospho-L-seryl-[protein] + ADP + H(+). It carries out the reaction L-threonyl-[protein] + ATP = O-phospho-L-threonyl-[protein] + ADP + H(+). Activated by calcium. Autophosphorylation may play an important role in the regulation of the kinase activity. Functionally, may play a role in signal transduction pathways that involve calcium as a second messenger. The protein is Calcium-dependent protein kinase 25 (CPK25) of Arabidopsis thaliana (Mouse-ear cress).